Here is a 138-residue protein sequence, read N- to C-terminus: Large ribosomal subunit protein bL17 (138 aa).

The protein belongs to the bacterial ribosomal protein bL17 family. Part of the 50S ribosomal subunit. Contacts protein L32.

The sequence is that of Large ribosomal subunit protein bL17 from Halorhodospira halophila (strain DSM 244 / SL1) (Ectothiorhodospira halophila (strain DSM 244 / SL1)).